The primary structure comprises 494 residues: Aspartyl/glutamyl-tRNA(Asn/Gln) amidotransferase subunit B (494 aa).

It belongs to the GatB/GatE family. GatB subfamily. Heterotrimer of A, B and C subunits.

The enzyme catalyses L-glutamyl-tRNA(Gln) + L-glutamine + ATP + H2O = L-glutaminyl-tRNA(Gln) + L-glutamate + ADP + phosphate + H(+). It carries out the reaction L-aspartyl-tRNA(Asn) + L-glutamine + ATP + H2O = L-asparaginyl-tRNA(Asn) + L-glutamate + ADP + phosphate + 2 H(+). In terms of biological role, allows the formation of correctly charged Asn-tRNA(Asn) or Gln-tRNA(Gln) through the transamidation of misacylated Asp-tRNA(Asn) or Glu-tRNA(Gln) in organisms which lack either or both of asparaginyl-tRNA or glutaminyl-tRNA synthetases. The reaction takes place in the presence of glutamine and ATP through an activated phospho-Asp-tRNA(Asn) or phospho-Glu-tRNA(Gln). The sequence is that of Aspartyl/glutamyl-tRNA(Asn/Gln) amidotransferase subunit B from Nitrobacter hamburgensis (strain DSM 10229 / NCIMB 13809 / X14).